Consider the following 171-residue polypeptide: Actin-related protein 2/3 complex subunit 4 (171 aa).

This sequence belongs to the ARPC4 family. Component of the Arp2/3 complex composed of ARP2, ARP3, ARC40/p41-ARC, ARC35/p34-ARC, ARC18/p21-ARC, ARC19/p20-ARC and ARC16/p16-ARC.

It localises to the cytoplasm. Its subcellular location is the cytoskeleton. The protein resides in the actin patch. Functions as actin-binding component of the Arp2/3 complex which is involved in regulation of actin polymerization and together with an activating nucleation-promoting factor (NPF) mediates the formation of branched actin networks. Seems to contact the mother actin filament. This Saccharomyces cerevisiae (strain ATCC 204508 / S288c) (Baker's yeast) protein is Actin-related protein 2/3 complex subunit 4 (ARC19).